Here is a 479-residue protein sequence, read N- to C-terminus: GDP-fucose protein O-fucosyltransferase 3 (479 aa).

Residues 1 to 8 (MVRIQRRK) are Cytoplasmic-facing. Residues 9-31 (LLASCLCVTATVFLLVTLQVMVE) traverse the membrane as a helical; Signal-anchor for type II membrane protein segment. At 32–479 (LGKFERKEFK…QEFWGLVFKD (448 aa)) the chain is on the lumenal side. 2 N-linked (GlcNAc...) asparagine glycosylation sites follow: Asn-110 and Asn-168. Cys-389 and Cys-392 form a disulfide bridge.

The protein belongs to the glycosyltransferase 10 family. In terms of tissue distribution, expressed in lung, digestive tract, gall bladder, placenta, kidney, uterus and brain. Not detected in spleen, heart, muscle, liver and pancreas.

Its subcellular location is the endoplasmic reticulum membrane. It is found in the golgi apparatus membrane. The protein resides in the golgi apparatus. The protein localises to the lysosome. It carries out the reaction L-threonyl-[protein] + GDP-beta-L-fucose = 3-O-(alpha-L-fucosyl)-L-threonyl-[protein] + GDP + H(+). It catalyses the reaction L-seryl-[protein] + GDP-beta-L-fucose = 3-O-(alpha-L-fucosyl)-L-seryl-[protein] + GDP + H(+). Its pathway is protein modification; protein glycosylation. Its function is as follows. Protein O-fucosyltransferase that specifically catalyzes O-fucosylation of serine or threonine residues in EMI domains of target proteins, such as MMRN1, MMRN2 and EMID1. Attaches fucose through an O-glycosidic linkage. O-fucosylation of EMI domain-containing proteins may be required for facilitating protein folding and secretion. May also show alpha-(1,3)-fucosyltransferase activity toward the innermost N-acetyl glucosamine (GlcNAc) residue in biantennary N-glycan acceptors. However, this was tested with a library of synthetic substrates and this activity is unsure in vivo. May be involved in biosynthesis of Lewis X-carrying biantennary N-glycans that regulate neuron stem cell self-renewal during brain development. This Homo sapiens (Human) protein is GDP-fucose protein O-fucosyltransferase 3.